A 238-amino-acid chain; its full sequence is MRPNDRKADQVRPIKITRNYTAYAEGSVLVEFGNTKVLCNATVEESVPRWLKGQGRGWVTAEYGMLPRATHSRTRREAANGKQGGRTMEIQRLIARSLRAVVDLQAMGEFMITVDCDVIQADGGTRTASISGASVAMADAFQHLVDSGKLKANPMKGHVAAVSVGLLGDEVLCDLEYVEDSAADTDMNVVMTEEGKMIEIQGTAEGEPFSHEQLMALLESAKVGITEIVAAQKAALAN.

Phosphate contacts are provided by residues R86 and 124 to 126 (GTR).

Belongs to the RNase PH family. Homohexameric ring arranged as a trimer of dimers.

It carries out the reaction tRNA(n+1) + phosphate = tRNA(n) + a ribonucleoside 5'-diphosphate. Phosphorolytic 3'-5' exoribonuclease that plays an important role in tRNA 3'-end maturation. Removes nucleotide residues following the 3'-CCA terminus of tRNAs; can also add nucleotides to the ends of RNA molecules by using nucleoside diphosphates as substrates, but this may not be physiologically important. Probably plays a role in initiation of 16S rRNA degradation (leading to ribosome degradation) during starvation. The chain is Ribonuclease PH from Vibrio parahaemolyticus serotype O3:K6 (strain RIMD 2210633).